The primary structure comprises 269 residues: dITP/XTP pyrophosphatase (269 aa).

22–27 (SNNAHK) serves as a coordination point for substrate. Asp82 serves as the catalytic Proton acceptor. Asp82 provides a ligand contact to Mg(2+). Residues Ser83, 165–168 (FGYD), Lys188, and 193–194 (HR) each bind substrate.

Belongs to the HAM1 NTPase family. Homodimer. The cofactor is Mg(2+).

The enzyme catalyses XTP + H2O = XMP + diphosphate + H(+). It carries out the reaction dITP + H2O = dIMP + diphosphate + H(+). The catalysed reaction is ITP + H2O = IMP + diphosphate + H(+). Functionally, pyrophosphatase that catalyzes the hydrolysis of nucleoside triphosphates to their monophosphate derivatives, with a high preference for the non-canonical purine nucleotides XTP (xanthosine triphosphate), dITP (deoxyinosine triphosphate) and ITP. Seems to function as a house-cleaning enzyme that removes non-canonical purine nucleotides from the nucleotide pool, thus preventing their incorporation into DNA/RNA and avoiding chromosomal lesions. In Treponema pallidum (strain Nichols), this protein is dITP/XTP pyrophosphatase.